The following is a 480-amino-acid chain: Beta-amyrin 28-monooxygenase (480 aa).

The chain crosses the membrane as a helical span at residues 3–23 (VFFLSLLLICVLSVSIRLYLL). Cys-427 is a binding site for heme.

This sequence belongs to the cytochrome P450 family. Heme serves as cofactor. Expressed in leaves, stems and fruit skin.

The protein localises to the membrane. The enzyme catalyses beta-amyrin + 3 reduced [NADPH--hemoprotein reductase] + 3 O2 = oleanolate + 3 oxidized [NADPH--hemoprotein reductase] + 4 H2O + 4 H(+). Functionally, catalyzes the carboxylation of beta-amyrin at the C-28 position to form oleanolic acid. May be involved in saponin biosynthesis in fruit skin. The sequence is that of Beta-amyrin 28-monooxygenase from Vitis vinifera (Grape).